The primary structure comprises 168 residues: Peptide deformylase (168 aa).

Residues Cys92 and His134 each contribute to the Fe cation site. Residue Glu135 is part of the active site. A Fe cation-binding site is contributed by His138.

The protein belongs to the polypeptide deformylase family. Requires Fe(2+) as cofactor.

It carries out the reaction N-terminal N-formyl-L-methionyl-[peptide] + H2O = N-terminal L-methionyl-[peptide] + formate. In terms of biological role, removes the formyl group from the N-terminal Met of newly synthesized proteins. Requires at least a dipeptide for an efficient rate of reaction. N-terminal L-methionine is a prerequisite for activity but the enzyme has broad specificity at other positions. The polypeptide is Peptide deformylase (Teredinibacter turnerae (strain ATCC 39867 / T7901)).